A 689-amino-acid chain; its full sequence is Transcription termination factor Rho (689 aa).

Residues Met1 to Thr20 show a composition bias toward polar residues. 2 disordered regions span residues Met1–Val90 and Ala151–Asn213. Over residues Pro52–Ala65 the composition is skewed to basic residues. Low complexity-rich tracts occupy residues Asn170–Glu183 and Asn191–Asn213. The Rho RNA-BD domain maps to Ile287–Glu362. Residues Gly405 to Ser410, Arg417 to Val422, and Arg448 each bind ATP.

Belongs to the Rho family. As to quaternary structure, homohexamer. The homohexamer assembles into an open ring structure.

Facilitates transcription termination by a mechanism that involves Rho binding to the nascent RNA, activation of Rho's RNA-dependent ATPase activity, and release of the mRNA from the DNA template. This chain is Transcription termination factor Rho, found in Fibrobacter succinogenes (strain ATCC 19169 / S85).